Reading from the N-terminus, the 603-residue chain is NADH-ubiquinone oxidoreductase chain 5 (603 aa).

Helical transmembrane passes span 4–24 (FTTMTALTLTSLIPPITATLI), 38–58 (TAIASAFTISLIPTTMFICLG), 89–109 (FLPVALLITWSIMEFSLWYMA), 122–142 (LIFLITMIILVTANNLLQLFI), 171–191 (AILYNRIGDIGFILALAWFLL), 211–233 (LPLLGLLLAAAGKSAQLGLHPWL), 241–261 (TPVSALLHSSTMVVAGVFLLI), 273–293 (IQTLTLCLGAITTLFAAICAL), 301–320 (IVAFSTSSQLGLMMVTIGIN), 325–347 (ALLHICTHAFFKALLFMCSGSII), 366–386 (MPLTSTSLTISSLALAGMPFL), 405–424 (NTWALSITLIATSLTGAYST), 457–477 (LMLGSLFAGFLITNNIPPMSL), 488–508 (LAALAATLLGLLVALDLNYLA), 524–544 (IMLGFYPSIIHRMIPHLSLLM), and 582–602 (GLIKLYFLSFLIPLLLILLMI).

The protein belongs to the complex I subunit 5 family. In terms of assembly, core subunit of respiratory chain NADH dehydrogenase (Complex I) which is composed of 45 different subunits.

The protein localises to the mitochondrion inner membrane. It catalyses the reaction a ubiquinone + NADH + 5 H(+)(in) = a ubiquinol + NAD(+) + 4 H(+)(out). Core subunit of the mitochondrial membrane respiratory chain NADH dehydrogenase (Complex I) which catalyzes electron transfer from NADH through the respiratory chain, using ubiquinone as an electron acceptor. Essential for the catalytic activity and assembly of complex I. This is NADH-ubiquinone oxidoreductase chain 5 (MT-ND5) from Pongo abelii (Sumatran orangutan).